The primary structure comprises 71 residues: Lantibiotic Flvbeta.c (71 aa).

Residues M1–A33 constitute a propeptide, cleaved by FlvT. Residues S35–C39 constitute a cross-link (lanthionine (Ser-Cys); by FlvM2). S36 bears the 2,3-didehydroalanine (Ser); by FlvM2 mark. Cross-links (beta-methyllanthionine (Thr-Cys); by FlvM2) lie at residues T54–C60, T62–C65, and T66–C69.

Contains LL-lanthionine and DL-beta-methyllanthionine, when coepressed in E.coli with the flavecin synthetase FlvM2.

The protein resides in the secreted. In terms of biological role, lanthionine-containing peptide antibiotic (lantibiotic) that is probably active on Gram-positive bacteria, since its analog [Del1]Flvbeta.c shows antibacterial activity against M.luteus. This activity is not synergistically enhanced by [Del2]Flvalpha.a, an analog of Flvalpha.a, which is encoded by the same operon than Flvbeta.c. The bactericidal activity of lantibiotics is based on depolarization of energized bacterial cytoplasmic membranes, initiated by the formation of aqueous transmembrane pores. This is Lantibiotic Flvbeta.c from Ruminococcus flavefaciens.